We begin with the raw amino-acid sequence, 645 residues long: MFEISVHPVPDAVRQRAYLNDDDYQRLYRQSVENPDEFWGEQAKAFLDWFKPWHSVHHGDLRKGQATWFKGGQLNVAYNCIDRHLERRGEQIAIVWEGDNPSESAHITYRKLHHNVCRLANVLKSRGVEKGDRVCIYMPMIPEAAYAMLACARIGAVHSVVFGGFSPDSLRDRILDADCRTVITADEGVRGGKYIPLKQNVEKALKDCPDVSTVVVVERTQGDIPWVEGRDIWYHEALHAASADCPAEAMDAEDPLFILYTSGSTGKPKGVLHTTGGYLLGAAMTHKYVFDYHDGDVYWCTADVGWVTGHSYIVYGPLANGATTLMFEGVPNYPDASRFWQVIDKHQVNIFYTAPTAIRALMREGDAPVRQTSRSSLRLLGSVGEPINPEAWEWYYQVVGEKRCPILDTWWQTETGSILITPLPGATALKPGSATRPFFGVQPVLLDEKGKEIDGAGSGVLAIKASWPSQIRSVYGDHQRMIDTYFKPYPGYYFSGDGARRDEDGYYWITGRVDDVINVSGHRIGTAEVESALVLHDAVAEAAVVGCPHDVKGQAIYAFVTLMAGSQPSEALQQELLALVGKEIGSFAKPDHLQWAPSLPKTRSGKIMRRILRKIACNELDSLGDTSTLADPGVVQGLIDNRLNR.

CoA contacts are provided by residues 190 to 193 (RGGK), Thr-308, and Asn-332. ATP-binding positions include 384–386 (GEP), 408–413 (DTWWQT), Asp-497, and Arg-512. A CoA-binding site is contributed by Ser-520. Arg-523 contacts ATP. Mg(2+) is bound by residues Val-534, His-536, and Val-539. Lys-606 bears the N6-acetyllysine mark.

It belongs to the ATP-dependent AMP-binding enzyme family. Requires Mg(2+) as cofactor. Post-translationally, acetylated. Deacetylation by the SIR2-homolog deacetylase activates the enzyme.

It carries out the reaction acetate + ATP + CoA = acetyl-CoA + AMP + diphosphate. Catalyzes the conversion of acetate into acetyl-CoA (AcCoA), an essential intermediate at the junction of anabolic and catabolic pathways. AcsA undergoes a two-step reaction. In the first half reaction, AcsA combines acetate with ATP to form acetyl-adenylate (AcAMP) intermediate. In the second half reaction, it can then transfer the acetyl group from AcAMP to the sulfhydryl group of CoA, forming the product AcCoA. This chain is Acetyl-coenzyme A synthetase 2, found in Pseudomonas aeruginosa (strain ATCC 15692 / DSM 22644 / CIP 104116 / JCM 14847 / LMG 12228 / 1C / PRS 101 / PAO1).